The primary structure comprises 294 residues: Tetraspanin-15 (294 aa).

Residues 1–23 lie on the Cytoplasmic side of the membrane; it reads MPRGDSEQVRYCARFSYLWLKFS. The chain crosses the membrane as a helical span at residues 24 to 44; the sequence is LVIYSTVFWLIGGLVLSVGIY. Residues 45–62 are Extracellular-facing; it reads AEVERQKYKTLESAFLAP. A helical transmembrane segment spans residues 63-83; it reads AIILILLGVVMFIVSFIGVLA. Residues 84-93 are Cytoplasmic-facing; that stretch reads SLRDNLCLLQ. A helical transmembrane segment spans residues 94-114; that stretch reads AFMYILGICLIIELIGGVVAL. Residues 115–235 are Extracellular-facing; it reads IFRNQTIDFL…WFTDNYTIMA (121 aa). The N-linked (GlcNAc...) asparagine glycan is linked to Asn118. Cystine bridges form between Cys154–Cys219, Cys155–Cys185, Cys171–Cys179, and Cys186–Cys198. Residues Asn189 and Asn230 are each glycosylated (N-linked (GlcNAc...) asparagine). Residues 236 to 256 form a helical membrane-spanning segment; that stretch reads GVLLGILLPQFLGVLLTFLYI. Residues 257-294 lie on the Cytoplasmic side of the membrane; that stretch reads TRVEDIITEHSVTDGLLGPGTKAGVEAAGTGCCMCYPI.

The protein belongs to the tetraspanin (TM4SF) family. In terms of assembly, interacts with ADAM10; the interaction influences ADAM10 substrate specificity, endocytosis and turnover. In terms of processing, palmitoylated.

The protein resides in the cell membrane. The protein localises to the late endosome membrane. Functionally, part of TspanC8 subgroup, composed of 6 members that interact with the transmembrane metalloprotease ADAM10. This interaction is required for ADAM10 exit from the endoplasmic reticulum and for enzymatic maturation and trafficking to the cell surface as well as substrate specificity. Different TspanC8/ADAM10 complexes have distinct substrates. Promotes ADAM10-mediated cleavage of CDH2. Negatively regulates ligand-induced Notch activity probably by regulating ADAM10 activity. This chain is Tetraspanin-15 (TSPAN15), found in Bos taurus (Bovine).